We begin with the raw amino-acid sequence, 1103 residues long: Activity-dependent neuroprotector homeobox protein (1103 aa).

Residues Lys39 and Lys72 each participate in a glycyl lysine isopeptide (Lys-Gly) (interchain with G-Cter in SUMO2) cross-link. The segment at 74-97 adopts a C2H2-type 1; degenerate zinc-finger fold; that stretch reads FCCSACPFSSKFFSAYKSHFRNVH. Ser98 is modified (phosphoserine). The C2H2-type 2; degenerate zinc finger occupies 107–129; that stretch reads LNCPYCTFNADKKTLETHIKIFH. The disordered stretch occupies residues 133-154; it reads SSAPSSSLSTFKDKNKNDGLKP. A compositionally biased stretch (basic and acidic residues) spans 143 to 154; it reads FKDKNKNDGLKP. Glycyl lysine isopeptide (Lys-Gly) (interchain with G-Cter in SUMO2) cross-links involve residues Lys144 and Lys155. The C2H2-type 3; degenerate zinc finger occupies 165 to 188; sequence YYCKKCTYRDPLYEIVRKHIYREH. Glycyl lysine isopeptide (Lys-Gly) (interchain with G-Cter in SUMO2) cross-links involve residues Lys203, Lys231, Lys266, Lys274, Lys278, Lys279, Lys311, and Lys335. The C2H2-type 4; degenerate zinc finger occupies 221–244; it reads IHCKRCLFMPKSYEALVQHVIEDH. Arg348 is modified (asymmetric dimethylarginine). The neuroprotective peptide (NAP) stretch occupies residues 354–361; the sequence is NAPVSIPQ. Residues 360–439 are disordered; sequence PQQSQSVKQL…PAATGPPPSN (80 aa). Residues Lys367 and Lys408 each participate in a glycyl lysine isopeptide (Lys-Gly) (interchain with G-Cter in SUMO2) cross-link. Polar residues predominate over residues 393-423; it reads SLQTANTSSLPPGQVKSPSVSQSQASRVLGQ. 2 positions are modified to phosphoserine: Ser409 and Ser413. Lys427 is covalently cross-linked (Glycyl lysine isopeptide (Lys-Gly) (interchain with G-Cter in SUMO2)). Pro residues predominate over residues 427–438; that stretch reads KPPPAATGPPPS. Residues 447-469 form a C2H2-type 5; atypical zinc finger; that stretch reads KICTICNELFPENVYSVHFEKEH. 2 C2H2-type zinc fingers span residues 489-510 and 512-535; these read SKCL…MLIH and LSCP…RMVH. Residues Lys600 and Lys606 each participate in a glycyl lysine isopeptide (Lys-Gly) (interchain with G-Cter in SUMO2) cross-link. Ser608 is modified (phosphoserine). Glycyl lysine isopeptide (Lys-Gly) (interchain with G-Cter in SUMO2) cross-links involve residues Lys616, Lys621, Lys632, and Lys658. The C2H2-type 8; atypical zinc finger occupies 622–647; it reads TLCPLCFSILKGPISDALAHHLRERH. A C2H2-type 9; atypical zinc finger spans residues 662 to 686; sequence YKCIHCLGVYTSNMTASTITLHLVH. The tract at residues 691 to 712 is disordered; that stretch reads GKTQNGQDKTNAPSRLNQSPGL. The segment covering 692–710 has biased composition (polar residues); sequence KTQNGQDKTNAPSRLNQSP. A Glycyl lysine isopeptide (Lys-Gly) (interchain with G-Cter in SUMO2) cross-link involves residue Lys699. Phosphoserine is present on Ser709. Residues Lys716, Lys728, and Lys731 each participate in a glycyl lysine isopeptide (Lys-Gly) (interchain with G-Cter in SUMO2) cross-link. Ser738 is subject to Phosphoserine. Lys745 participates in a covalent cross-link: Glycyl lysine isopeptide (Lys-Gly) (interchain with G-Cter in SUMO2). The segment at residues 754 to 814 is a DNA-binding region (homeobox); that stretch reads LDPKGHEDDS…SNKRKKCVRD (61 aa). The residue at position 805 (Ser805) is a Phosphoserine. Glycyl lysine isopeptide (Lys-Gly) (interchain with G-Cter in SUMO2) cross-links involve residues Lys807, Lys829, and Lys835. The interval 873-1029 is disordered; that stretch reads DSFSDSFEHL…VQDDTEQLKW (157 aa). 5 positions are modified to phosphoserine: Ser876, Ser878, Ser886, Ser889, and Ser905. Glycyl lysine isopeptide (Lys-Gly) (interchain with G-Cter in SUMO2) cross-links involve residues Lys914, Lys929, and Lys936. Residues 922–954 are compositionally biased toward basic and acidic residues; that stretch reads ESEKLDQKEEEDGSKYETIHLTEERAKLMHDAS. Phosphoserine is present on residues Ser954 and Ser956. The segment covering 972 to 982 has biased composition (polar residues); that stretch reads PSESGPGSRQV. A Glycyl lysine isopeptide (Lys-Gly) (interchain with G-Cter in SUMO2) cross-link involves residue Lys1017. Lys1036 and Lys1043 each carry N6-acetyllysine; alternate. Glycyl lysine isopeptide (Lys-Gly) (interchain with G-Cter in SUMO2); alternate cross-links involve residues Lys1036 and Lys1043. Residues 1045 to 1103 form a disordered region; it reads QSQWENASENAERLPNPQIEWQNSTIDSEDGEQFDSMTDGVADPMHGSLTGVKLSSQQA. Ser1072 bears the Phosphoserine mark.

As to quaternary structure, interacts (via N-terminal region) with beta-catenin/CTNNB1 (via the central armadillo domains); interaction is direct and stabilizes CTNNB1 by modulating its phosphorylation by glycogen synthase kinase-3 beta GSK3B.

Its subcellular location is the nucleus. It is found in the chromosome. In terms of biological role, may be involved in transcriptional regulation. May mediate some of the neuroprotective peptide VIP-associated effects involving normal growth and cancer proliferation. Positively modulates WNT-beta-catenin/CTNN1B signaling, acting by regulating phosphorylation of, and thereby stabilizing, CTNNB1. May be required for neural induction and neuronal differentiation. May be involved in erythroid differentiation. This Rattus norvegicus (Rat) protein is Activity-dependent neuroprotector homeobox protein (Adnp).